A 186-amino-acid polypeptide reads, in one-letter code: MLALFNKLLDWFKALFWKEEMELTLVGLQYSGKTTFVNVIASGQFNEDMIPTVGFNMRKITKGNVTIKLWDIGGQPRFRSMWERYCRGVSAIVYMVDAADQDKIEASKNELHNLLDKAQLQGIPVLVLGNKRDIPGALDEKELIERMNLSAIQDREICCYSISCKEKDNIDITLQWLIQHSKSRRS.

The segment at residues 1–19 (MLALFNKLLDWFKALFWKE) is an intramembrane region (note=Mediates targeting to membranes). Residues 29–35 (QYSGKTT), 71–75 (DIGGQ), and 130–133 (NKRD) each bind GTP.

It belongs to the small GTPase superfamily. Arf family.

Its subcellular location is the late endosome membrane. It is found in the lysosome membrane. In terms of biological role, may play a role in lysosomes motility. Alternatively, may play a role in chromosome segregation. In Xenopus tropicalis (Western clawed frog), this protein is ADP-ribosylation factor-like protein 8A (arl8a).